Consider the following 546-residue polypeptide: Membrane protein insertase YidC (546 aa).

Residues 6–26 (LILFIVFSFSLLLLWEAWQDK) form a helical membrane-spanning segment. The disordered stretch occupies residues 31-56 (PATRPVAGAPAGSAAPTPSTALNAPA). The segment covering 37-56 (AGAPAGSAAPTPSTALNAPA) has biased composition (low complexity). 4 consecutive transmembrane segments (helical) span residues 351–371 (LVGNWGWAIIILTILIKLALY), 425–445 (LPILIQIPVFIALYWVLLAAV), 465–482 (WYILPIIMGVTSILQVKL), and 494–514 (IMMIMPVAFTVMFVFFPAGLV).

This sequence belongs to the OXA1/ALB3/YidC family. Type 1 subfamily. As to quaternary structure, interacts with the Sec translocase complex via SecD. Specifically interacts with transmembrane segments of nascent integral membrane proteins during membrane integration.

The protein localises to the cell inner membrane. Functionally, required for the insertion and/or proper folding and/or complex formation of integral membrane proteins into the membrane. Involved in integration of membrane proteins that insert both dependently and independently of the Sec translocase complex, as well as at least some lipoproteins. Aids folding of multispanning membrane proteins. In Thiobacillus denitrificans (strain ATCC 25259 / T1), this protein is Membrane protein insertase YidC.